Here is a 2610-residue protein sequence, read N- to C-terminus: E3 ubiquitin-protein ligase HECTD1 (2610 aa).

The tract at residues 246-269 (TVSGPSSACKPGRSTTGAPSTTAD) is disordered. The span at 258-269 (RSTTGAPSTTAD) shows a compositional bias: polar residues. 4 ANK repeats span residues 395 to 424 (VGQTLLNWASAFGTQEMVEFLCERGADVNR), 426 to 455 (QRSSSLHYAACFGRPQVAKTLLRHGANPDL), 459 to 491 (DGKTPLDKARERGHSEVVAILQSPGDWMCPVNK), and 579 to 612 (ITATVLDQEDDDDGHLLALQIIRDLVDKGGDIFL). Positions 489-513 (VNKGDDKKKKDTNKDEEECNEPKGD) are disordered. The segment covering 491-501 (KGDDKKKKDTN) has biased composition (basic and acidic residues). Disordered regions lie at residues 627–657 (LAGPSSDDENEEESKPEKEDEPQEDAKELQQ) and 707–748 (SSGS…LSAP). 2 positions are modified to phosphoserine: Ser-631 and Ser-640. Residues 639–657 (ESKPEKEDEPQEDAKELQQ) show a composition bias toward basic and acidic residues. The span at 707–717 (SSGSPEGGSDS) shows a compositional bias: low complexity. The span at 718-729 (SESRSEFLEKLQ) shows a compositional bias: basic and acidic residues. The region spanning 1266 to 1338 (VRSQVLKYMV…KFDLKLAPGY (73 aa)) is the MIB/HERC2 domain. Disordered stretches follow at residues 1343 to 1406 (VASP…KTER) and 1433 to 1483 (ENVP…SMGI). A compositionally biased stretch (polar residues) spans 1348–1365 (PVSSTVSGTTQSWSSLVK). Composition is skewed to low complexity over residues 1373-1395 (SAAAGSSSRKGSSSSVCSVASSS) and 1441-1458 (GSSSSASTSTLTAETGSE). The residue at position 1384 (Ser-1384) is a Phosphoserine. A compositionally biased stretch (polar residues) spans 1469–1479 (SVRTPGESSAI). Ser-1488 is modified (phosphoserine). The segment at 1496–1515 (ELTNKEAASQRPLSSSASNR) is disordered. Residue Ser-1567 is modified to Phosphoserine. Disordered regions lie at residues 1592-1611 (GAQSFPNLTTPGTTSTVTMS) and 1674-1757 (ELDD…KGGR). Residues 1600–1611 (TTPGTTSTVTMS) show a composition bias toward low complexity. Positions 1674–1703 (ELDDDEDLPEPDEEDDENEDDNQEDQEYEE) are enriched in acidic residues. The residue at position 1760 (Thr-1760) is a Phosphothreonine. Phosphoserine is present on Ser-1772. The tract at residues 1777-1797 (AFDPRPGRTNVQQTTDLEIPP) is disordered. The interval 2029-2103 (FTFPPDEFTS…AIVWLQNRRE (75 aa)) is K-box. An HECT domain is found at 2151–2610 (IHADRKSVLE…ATMEKGFHLN (460 aa)). The disordered stretch occupies residues 2297 to 2318 (HCTESQSEASTEEGHDSLSVGS). A Phosphoserine modification is found at Ser-2318. The Glycyl thioester intermediate role is filled by Cys-2579.

The protein belongs to the UPL family. K-HECT subfamily. In terms of assembly, interacts with IGSF1.

It carries out the reaction S-ubiquitinyl-[E2 ubiquitin-conjugating enzyme]-L-cysteine + [acceptor protein]-L-lysine = [E2 ubiquitin-conjugating enzyme]-L-cysteine + N(6)-ubiquitinyl-[acceptor protein]-L-lysine.. It functions in the pathway protein modification; protein ubiquitination. E3 ubiquitin-protein ligase which accepts ubiquitin from an E2 ubiquitin-conjugating enzyme in the form of a thioester and then directly transfers the ubiquitin to targeted substrates. Mediates 'Lys-63'-linked polyubiquitination of HSP90AA1 which leads to its intracellular localization and reduced secretion. Negatively regulating HSP90AA1 secretion in cranial mesenchyme cells may impair their emigration and may be essential for the correct development of the cranial neural folds and neural tube closure. Catalyzes ubiquitination and degradation of ZNF622, an assembly factor for the ribosomal 60S subunit, in hematopoietic cells, thereby promoting hematopoietic stem cell renewal. This chain is E3 ubiquitin-protein ligase HECTD1, found in Homo sapiens (Human).